Consider the following 189-residue polypeptide: Mediator of RNA polymerase II transcription subunit 28 (189 aa).

Residues 75-115 are a coiled coil; that stretch reads YMLIKDENQDLSIEIQRKEALLQKHYNRLEEWKACLSDIQQ. Positions 124 to 147 are disordered; sequence PIGSGMLQGPGGGMPPMGGTPPRP. Positions 129–139 are enriched in gly residues; the sequence is MLQGPGGGMPP.

This sequence belongs to the Mediator complex subunit 28 family. In terms of assembly, component of the Mediator complex, which includes at least CDK8, MED4, MED6, MED11, MED14, MED17, MED18, MED20, MED21, MED22, MED27, MED28, MED30 and MED31.

It localises to the nucleus. Functionally, component of the Mediator complex, a coactivator involved in the regulated transcription of nearly all RNA polymerase II-dependent genes. Mediator functions as a bridge to convey information from gene-specific regulatory proteins to the basal RNA polymerase II transcription machinery. Mediator is recruited to promoters by direct interactions with regulatory proteins and serves as a scaffold for the assembly of a functional preinitiation complex with RNA polymerase II and the general transcription factors. This Drosophila melanogaster (Fruit fly) protein is Mediator of RNA polymerase II transcription subunit 28 (MED28).